The sequence spans 274 residues: Large ribosomal subunit protein uL2 (274 aa).

Disordered stretches follow at residues 28 to 54 and 221 to 274; these read KPFA…TRHI and RGTA…RSKK. Residues 39–49 are compositionally biased toward polar residues; the sequence is KTGGRNNNGRI.

This sequence belongs to the universal ribosomal protein uL2 family. As to quaternary structure, part of the 50S ribosomal subunit. Forms a bridge to the 30S subunit in the 70S ribosome.

Its function is as follows. One of the primary rRNA binding proteins. Required for association of the 30S and 50S subunits to form the 70S ribosome, for tRNA binding and peptide bond formation. It has been suggested to have peptidyltransferase activity; this is somewhat controversial. Makes several contacts with the 16S rRNA in the 70S ribosome. This chain is Large ribosomal subunit protein uL2, found in Edwardsiella ictaluri (strain 93-146).